Reading from the N-terminus, the 222-residue chain is Voltage-dependent calcium channel gamma-1 subunit (222 aa).

Residues 1-10 (MSQTKMLKVR) are Cytoplasmic-facing. Residues 11–29 (VTLFCILAGIVLAMTAVVT) form a helical membrane-spanning segment. Residues 30-108 (DHWAVLSPHM…TQKEYSISAA (79 aa)) lie on the Extracellular side of the membrane. N-linked (GlcNAc...) asparagine glycosylation is found at N43 and N79. C57 and C80 are oxidised to a cystine. A helical membrane pass occupies residues 109–129 (AIAIFSLGFIILGSLCVLLSL). Residues 130-134 (GKKRD) lie on the Cytoplasmic side of the membrane. The chain crosses the membrane as a helical span at residues 135–155 (YLLRPASMFYAFAGLCILVSV). The Extracellular portion of the chain corresponds to 156–179 (EVMRQSVKRMIDSEDTVWIEYYYS). The helical transmembrane segment at 180-204 (WSFACACAAFILLFLGGLALLLFSL) threads the bilayer. At 205–222 (PRMPRNPWESCMDAEPEH) the chain is on the cytoplasmic side.

It belongs to the PMP-22/EMP/MP20 family. CACNG subfamily. Component of a calcium channel complex consisting of a pore-forming alpha subunit (CACNA1S) and the ancillary subunits CACNB1 or CACNB2, CACNG1 and CACNA2D1. The channel complex contains alpha, beta, gamma and delta subunits in a 1:1:1:1 ratio, i.e. it contains either CACNB1 or CACNB2. Post-translationally, N-glycosylated. In terms of tissue distribution, skeletal muscle.

It is found in the cell membrane. The protein resides in the sarcolemma. Its function is as follows. Regulatory subunit of the voltage-gated calcium channel that gives rise to L-type calcium currents in skeletal muscle. Regulates channel inactivation kinetics. This chain is Voltage-dependent calcium channel gamma-1 subunit (CACNG1), found in Homo sapiens (Human).